The sequence spans 222 residues: 7-cyano-7-deazaguanine synthase (222 aa).

14–24 (FSGGQDSTTCL) is a binding site for ATP. Zn(2+)-binding residues include cysteine 190, cysteine 199, cysteine 202, and cysteine 205.

This sequence belongs to the QueC family. Homodimer. It depends on Zn(2+) as a cofactor.

The catalysed reaction is 7-carboxy-7-deazaguanine + NH4(+) + ATP = 7-cyano-7-deazaguanine + ADP + phosphate + H2O + H(+). The protein operates within purine metabolism; 7-cyano-7-deazaguanine biosynthesis. Catalyzes the ATP-dependent conversion of 7-carboxy-7-deazaguanine (CDG) to 7-cyano-7-deazaguanine (preQ(0)). In Staphylococcus aureus (strain Mu3 / ATCC 700698), this protein is 7-cyano-7-deazaguanine synthase.